The following is a 223-amino-acid chain: Small ribosomal subunit protein uS3 (223 aa).

Residues 39-107 (VREFLHKKLA…PVQINIEEVR (69 aa)) form the KH type-2 domain.

The protein belongs to the universal ribosomal protein uS3 family. As to quaternary structure, part of the 30S ribosomal subunit. Forms a tight complex with proteins S10 and S14.

Its function is as follows. Binds the lower part of the 30S subunit head. Binds mRNA in the 70S ribosome, positioning it for translation. The polypeptide is Small ribosomal subunit protein uS3 (Francisella tularensis subsp. mediasiatica (strain FSC147)).